The following is a 202-amino-acid chain: ATP-dependent Clp protease proteolytic subunit (202 aa).

The active-site Nucleophile is Ser106. His131 is an active-site residue.

Belongs to the peptidase S14 family. As to quaternary structure, fourteen ClpP subunits assemble into 2 heptameric rings which stack back to back to give a disk-like structure with a central cavity, resembling the structure of eukaryotic proteasomes.

It is found in the cytoplasm. It carries out the reaction Hydrolysis of proteins to small peptides in the presence of ATP and magnesium. alpha-casein is the usual test substrate. In the absence of ATP, only oligopeptides shorter than five residues are hydrolyzed (such as succinyl-Leu-Tyr-|-NHMec, and Leu-Tyr-Leu-|-Tyr-Trp, in which cleavage of the -Tyr-|-Leu- and -Tyr-|-Trp bonds also occurs).. Functionally, cleaves peptides in various proteins in a process that requires ATP hydrolysis. Has a chymotrypsin-like activity. Plays a major role in the degradation of misfolded proteins. This is ATP-dependent Clp protease proteolytic subunit from Variovorax paradoxus (strain S110).